A 263-amino-acid polypeptide reads, in one-letter code: Insertion sequence IS21-like putative ATP-binding protein (263 aa).

114–121 (GPSGTGKT) contacts ATP.

This sequence belongs to the IS21/IS1162 putative ATP-binding protein family.

This is Insertion sequence IS21-like putative ATP-binding protein (tnpB) from Bacteroides fragilis.